The primary structure comprises 294 residues: HTH-type transcriptional regulator ClcR (294 aa).

The HTH lysR-type domain occupies 1-58; the sequence is MEFRQLRYFIAVAEEGNIGAAARRLHISQPPITRQIQALEQDLGVVLFERTHRGVELT. A DNA-binding region (H-T-H motif) is located at residues 18 to 37; it reads IGAAARRLHISQPPITRQIQ.

This sequence belongs to the LysR transcriptional regulatory family.

It localises to the cytoplasm. In terms of biological role, involved in regulation of chlorinated catechol metabolism. Transcriptional activator of the clcABD chlorocatechol oxidative operon. The polypeptide is HTH-type transcriptional regulator ClcR (clcR) (Pseudomonas putida (Arthrobacter siderocapsulatus)).